Consider the following 317-residue polypeptide: Multivesicular body subunit 12B (317 aa).

The interval 1-49 is disordered; it reads MRSCFCVRRSRDPPPPQPPPPQRGTDQATMPEVKELSEALPETPMDPIT. The segment covering 13–22 has biased composition (pro residues); sequence PPPPQPPPPQ. Residues 45–191 form the MABP domain; sequence MDPITGVGVV…SMGIWYRMGR (147 aa). Phosphoserine is present on S99. T120, T202, and T203 each carry phosphothreonine. Residues 193–218 form a disordered region; sequence PRNHDSSQPTTPSQSSASSTPAPNLP. The segment covering 198–214 has biased composition (low complexity); that stretch reads SSQPTTPSQSSASSTPA. S222 is subject to Phosphoserine. The UMA domain occupies 252–301; that stretch reads MDGVPFMISEKFSCIPESMQPFDLLGITIKSLAEIEKEYEYSFRTEQSAA. The segment at 297–317 is disordered; it reads EQSAAARLPPSPTRCQQIPQS. A Phosphoserine modification is found at S307.

This sequence belongs to the MVB12 family. As to quaternary structure, component of the ESCRT-I complex (endosomal sorting complex required for transport I) which consists of TSG101, VPS28, a VPS37 protein (VPS37A to -D) and MVB12A or MVB12B in a 1:1:1:1 stoichiometry. Interacts with TSG101; the association appears to be mediated by the TSG101-VPS37 binary subcomplex. Interacts with VPS28. Interacts with VPS37B; the association appears to be mediated by the TSG101-VPS37 binary subcomplex. Interacts with VPS37C; the association appears to be mediated by the TSG101-VPS37 binary subcomplex.

The protein resides in the endosome. It is found in the late endosome membrane. In terms of biological role, component of the ESCRT-I complex, a regulator of vesicular trafficking process. Required for the sorting of endocytic ubiquitinated cargos into multivesicular bodies. This chain is Multivesicular body subunit 12B (Mvb12b), found in Mus musculus (Mouse).